The sequence spans 196 residues: Cupin-domain-containing oxidoreductase srdB (196 aa).

In terms of domain architecture, Cupin type-2 spans 92–156 (DFAPGCKSNM…TSDEKPARML (65 aa)).

Belongs to the virC family.

Functionally, cupin-domain-containing oxidoreductase; part of the gene cluster that mediates the biosynthesis of sordarial, a salicylic aldehyde structurally related to the phytotoxin pyriculol. The most interesting aspect of this pathway is formation of an aromatic product from the highly reducing polyketide synthase srdA. SrdA synthesizes a reduced polyketide chain from one molecule of acetyl-CoA and five molecules of malonyl-CoA. The polyketide chain is then reductively released as an aldehyde. The oxidoreductases srdC, srdD and srdE then oxidize one of the hydroxy groups to facilitate the intramolecular aldol condensation, followed by dehydration to yield a salicylic aldehyde. This aldehyde can undergo facile reduction by endogenous reductases to yield the alcohol 1-hydroxy-2-hydroxymethyl-3-pent-1,3-dienylbenzene. The flavin-dependent srdI counteract against the propensity of the aldehydes to be reduced under physiological conditions and is responsible for reoxidizing 1-hydroxy-2-hydroxymethyl-3-pent-1,3-dienylbenzene back to the salicylic aldehyde. This salicylic aldehyde is then selectively epoxidized by the cupin-domain-containing oxidoreductase srdB to yield the epoxide, which can be hydrolyzed stereoselectively by the hydrolase srdG to give the final product sordarial. The chain is Cupin-domain-containing oxidoreductase srdB from Neurospora crassa (strain ATCC 24698 / 74-OR23-1A / CBS 708.71 / DSM 1257 / FGSC 987).